Reading from the N-terminus, the 104-residue chain is DNA-directed RNA polymerase subunit omega (104 aa).

Positions 53–104 (EIESGNVTIHPDPEGKREAVRRRIEEEKRRKEEEEKKIKEQIAKEKEDGEKI) are disordered. A compositionally biased stretch (basic and acidic residues) spans 63–104 (PDPEGKREAVRRRIEEEKRRKEEEEKKIKEQIAKEKEDGEKI).

It belongs to the RNA polymerase subunit omega family. As to quaternary structure, the RNAP catalytic core consists of 2 alpha, 1 beta, 1 beta' and 1 omega subunit. When a sigma factor is associated with the core the holoenzyme is formed, which can initiate transcription.

The enzyme catalyses RNA(n) + a ribonucleoside 5'-triphosphate = RNA(n+1) + diphosphate. Promotes RNA polymerase assembly. Latches the N- and C-terminal regions of the beta' subunit thereby facilitating its interaction with the beta and alpha subunits. The chain is DNA-directed RNA polymerase subunit omega from Streptococcus pneumoniae serotype 2 (strain D39 / NCTC 7466).